We begin with the raw amino-acid sequence, 846 residues long: Envelope glycoprotein gp160 (846 aa).

An N-terminal signal peptide occupies residues 1-31 (MRAREKERNCQNLWKWGIMLLGMLMTCSAAE). Residues 32 to 674 (DLWVTVYYGV…ITKWLWYIKL (643 aa)) lie on the Extracellular side of the membrane. Residues Cys-53 and Cys-73 are joined by a disulfide bond. 11 N-linked (GlcNAc...) asparagine; by host glycosylation sites follow: Asn-87, Asn-129, Asn-151, Asn-179, Asn-182, Asn-229, Asn-236, Asn-257, Asn-271, Asn-284, and Asn-290. Intrachain disulfides connect Cys-118–Cys-200, Cys-125–Cys-191, Cys-130–Cys-152, Cys-213–Cys-242, and Cys-223–Cys-234. A V1 region spans residues 130–151 (CTDELRNSKGNGKVEEEEKRKN). The V2 stretch occupies residues 152-191 (CSFNVRDKREQVYALFYKLDIVPIDNNNRTNSTNYRLINC). The V3 stretch occupies residues 291–327 (CTRPYKYTRQRTSIGLRQSLYTITGKKKKTGYIGQAH). A disulfide bond links Cys-291 and Cys-328. A glycan (N-linked (GlcNAc...) asparagine; by host) is linked at Asn-351. The tract at residues 360 to 370 (SSGGDPEITSH) is CD4-binding loop. Cystine bridges form between Cys-374-Cys-435 and Cys-381-Cys-408. The interval 381-408 (CNTSRLFNSTWNQTNSTGFNNGTVTLPC) is V4. Residues Asn-382, Asn-388, Asn-392, Asn-395, Asn-401, Asn-438, Asn-451, and Asn-452 are each glycosylated (N-linked (GlcNAc...) asparagine; by host). V5 stretches follow at residues 450–461 (ANNSSHETIRPG) and 453–461 (SSHETIRPG). A fusion peptide region spans residues 502 to 522 (AIGLGAVFLGFLGAAGSTMGA). The interval 564–582 (KQLQARVLAVERYLRDQQL) is immunosuppression. Residues Cys-588 and Cys-594 are joined by a disulfide bond. Residues Asn-601, Asn-606, Asn-615, and Asn-627 are each glycosylated (N-linked (GlcNAc...) asparagine; by host). Residues 623–657 (REIDNYTGLIYSLIEESQIQQEKNEKELLELDKWA) are a coiled coil. The interval 652–673 (ELDKWASLWNWFSITKWLWYIK) is MPER; binding to GalCer. The helical transmembrane segment at 675–695 (FIMIVGGLIGLRIVFAVLSVV) threads the bilayer. Topologically, residues 696-846 (NRVRQGYSPL…IRQGLERLLL (151 aa)) are cytoplasmic. A YXXL motif; contains endocytosis signal motif is present at residues 702 to 705 (YSPL). S-palmitoyl cysteine; by host attachment occurs at residues Cys-754 and Cys-827. The short motif at 845-846 (LL) is the Di-leucine internalization motif element.

The protein belongs to the HIV-1 env protein family. In terms of assembly, the mature envelope protein (Env) consists of a homotrimer of non-covalently associated gp120-gp41 heterodimers. The resulting complex protrudes from the virus surface as a spike. There seems to be as few as 10 spikes on the average virion. Interacts with host CD4, CCR5 and CXCR4. Gp120 also interacts with the C-type lectins CD209/DC-SIGN and CLEC4M/DC-SIGNR (collectively referred to as DC-SIGN(R)). Gp120 and gp41 interact with GalCer. Gp120 interacts with host ITGA4/ITGB7 complex; on CD4+ T-cells, this interaction results in rapid activation of integrin ITGAL/LFA-1, which facilitates efficient cell-to-cell spreading of HIV-1. Gp120 interacts with cell-associated heparan sulfate; this interaction increases virus infectivity on permissive cells and may be involved in infection of CD4- cells. As to quaternary structure, the mature envelope protein (Env) consists of a homotrimer of non-covalently associated gp120-gp41 heterodimers. The resulting complex protrudes from the virus surface as a spike. There seems to be as few as 10 spikes on the average virion. In terms of processing, highly glycosylated by host. The high number of glycan on the protein is reffered to as 'glycan shield' because it contributes to hide protein sequence from adaptive immune system. Post-translationally, palmitoylation of the transmembrane protein and of Env polyprotein (prior to its proteolytic cleavage) is essential for their association with host cell membrane lipid rafts. Palmitoylation is therefore required for envelope trafficking to classical lipid rafts, but not for viral replication. Specific enzymatic cleavages in vivo yield mature proteins. Envelope glycoproteins are synthesized as an inactive precursor that is heavily N-glycosylated and processed likely by host cell furin in the Golgi to yield the mature SU and TM proteins. The cleavage site between SU and TM requires the minimal sequence [KR]-X-[KR]-R. About 2 of the 9 disulfide bonds of gp41 are reduced by P4HB/PDI, following binding to CD4 receptor.

The protein localises to the virion membrane. Its subcellular location is the host cell membrane. It is found in the host endosome membrane. In terms of biological role, oligomerizes in the host endoplasmic reticulum into predominantly trimers. In a second time, gp160 transits in the host Golgi, where glycosylation is completed. The precursor is then proteolytically cleaved in the trans-Golgi and thereby activated by cellular furin or furin-like proteases to produce gp120 and gp41. Its function is as follows. Attaches the virus to the host lymphoid cell by binding to the primary receptor CD4. This interaction induces a structural rearrangement creating a high affinity binding site for a chemokine coreceptor like CXCR4 and/or CCR5. Acts as a ligand for CD209/DC-SIGN and CLEC4M/DC-SIGNR, which are respectively found on dendritic cells (DCs), and on endothelial cells of liver sinusoids and lymph node sinuses. These interactions allow capture of viral particles at mucosal surfaces by these cells and subsequent transmission to permissive cells. HIV subverts the migration properties of dendritic cells to gain access to CD4+ T-cells in lymph nodes. Virus transmission to permissive T-cells occurs either in trans (without DCs infection, through viral capture and transmission), or in cis (following DCs productive infection, through the usual CD4-gp120 interaction), thereby inducing a robust infection. In trans infection, bound virions remain infectious over days and it is proposed that they are not degraded, but protected in non-lysosomal acidic organelles within the DCs close to the cell membrane thus contributing to the viral infectious potential during DCs' migration from the periphery to the lymphoid tissues. On arrival at lymphoid tissues, intact virions recycle back to DCs' cell surface allowing virus transmission to CD4+ T-cells. Functionally, acts as a class I viral fusion protein. Under the current model, the protein has at least 3 conformational states: pre-fusion native state, pre-hairpin intermediate state, and post-fusion hairpin state. During fusion of viral and target intracellular membranes, the coiled coil regions (heptad repeats) assume a trimer-of-hairpins structure, positioning the fusion peptide in close proximity to the C-terminal region of the ectodomain. The formation of this structure appears to drive apposition and subsequent fusion of viral and target cell membranes. Complete fusion occurs in host cell endosomes and is dynamin-dependent, however some lipid transfer might occur at the plasma membrane. The virus undergoes clathrin-dependent internalization long before endosomal fusion, thus minimizing the surface exposure of conserved viral epitopes during fusion and reducing the efficacy of inhibitors targeting these epitopes. Membranes fusion leads to delivery of the nucleocapsid into the cytoplasm. In Human immunodeficiency virus type 1 group M subtype D (isolate NDK) (HIV-1), this protein is Envelope glycoprotein gp160.